The primary structure comprises 596 residues: Leucine-rich repeat and IQ domain-containing protein 4 (596 aa).

LRR repeat units follow at residues 22-44 (LPRL…LLRQ), 59-83 (LTDR…ILAL), 84-106 (KELE…IQQL), 108-129 (NTKV…LGAL), 130-152 (SSLE…VVSR), 153-176 (LRTL…ICKS), 177-200 (LHHL…IVNQ), 202-223 (KLRE…LCVL), 224-246 (YNLE…IGHL), 248-269 (RLQK…LSQC), 270-293 (SKLS…ELLT), 295-315 (LTEV…LCSW), 317-337 (SLHL…SFKR), 338-361 (LINL…ICAL), 362-384 (KNLE…ISLL), 385-407 (SNLK…IFSL), 410-433 (LEKL…IKRL), 434-457 (MNLK…GLMP), 459-479 (LEVL…ICRT), 480-502 (RNLR…LDHL), 504-525 (NLKV…VCNQ), and 527-549 (NEAI…TIQA). The 30-residue stretch at 540 to 569 (RKMMATTIQAWWRGIMVRKGYGSYEELLKA) folds into the IQ domain. Basic residues predominate over residues 569–587 (ARKKGKSPPKDKKGKKAAK). The segment at 569–596 (ARKKGKSPPKDKKGKKAAKGKPEKGNKK) is disordered.

In Mus musculus (Mouse), this protein is Leucine-rich repeat and IQ domain-containing protein 4 (Lrriq4).